The following is a 527-amino-acid chain: MDPNTWSADLFQLASQWQEKGLLTRYNVFMAISITVTALYLIHKGISRARSFRAPLVGRRFSWEPKWLIGLRFSQYGLEHLMEGCKRFNDGIFKVARNDTDILVIPNRYVDELHSKPEEHISAIKAHMKNLLGKYSTIDILQEGNLHTHVLQTKLTPNLGSLMSTIEEELRFAMTEEIPSTHEDWKDVSIYDIILHLVARISARVFVGQPTCRNQEWLDTSIRFTEHAFLTLAILRRLPKFLHPIVAPLLPSYWAVHRDLQTAKRIISPIVKQRTADEASGEPGYKKPTDLLQWMIDVASPRDGQPDKLAHRQLVLSLAAIHTTTMAVAYAIYDLCQFPEYVEPLRQEITDSLEQDGKWAKTTLTKMHKLDSFIKESQRLSPPSLLSFQRIVMQEVTLSDGTALPKGTHISVPAAEVLQGKAFDSSFDGFRYSRRRQNSGEAHKYQFATTDKNSLHFGHGKYACPGRFFAAYEIKMIISHLLMDYDFRFPPGTSRPKVFSADEVLLPDPSTRVLMHRRTDSAHSNCH.

Residues 21–43 (GLLTRYNVFMAISITVTALYLIH) traverse the membrane as a helical segment. Cys-464 contributes to the heme binding site.

It belongs to the cytochrome P450 family. Heme serves as cofactor.

The protein resides in the membrane. It participates in secondary metabolite biosynthesis; terpenoid biosynthesis. Cytochrome P450 monooxygenase; part of the gene cluster that mediates the biosynthesis of 15-deoxyoxalicine B. The first step of the pathway is the synthesis of nicotinyl-CoA from nicotinic acid by the nicotinic acid-CoA ligase olcI. Nicotinyl-CoA is then a substrate of polyketide synthase olcA to produce 4-hydroxy-6-(3-pyridinyl)-2H-pyran-2-one (HPPO) which is further prenylated by the polyprenyl transferase olcH to yield geranylgeranyl-HPPO. Geranylgeranyl pyrophosphate is provided by the cluster-specific geranylgeranyl pyrophosphate synthase olcC. The FAD-dependent monooxygenase olcE catalyzes the epoxidation of geranylgeranyl-HPPO and the terpene cyclase olcD catalyzes the cyclization of the terpenoid component, resulting in the formation of the tricyclic terpene moiety seen in predecaturin E. The cytochrome P450 monooxygenase then catalyzes the allylic oxidation of predecaturin E, which is followed by spirocylization with concomitant loss of one molecule of water to form decaturin E. Decaturin E is the substrate of the cytochrome P450 monooxygenase olcJ which hydroxylates it at the C-29 position to form decaturin F. The short-chain dehydrogenase/reductase olcF may catalyze the oxidation of decaturin F to generate the 29-hydroxyl-27-one intermediate, and subsequent hemiacetal formation probably leads to the formation of decaturin C. The dioxygenase olcK may be a peroxisomal enzyme that catalyzes the hydroxylation of decaturin C into decaturin A once decaturin C is shuttled into the peroxisome by the MFS transporter olcL. Finally the cytochrome P450 monooxygenase olcB catalyzes the oxidative rearrangement to yield 15-deoxyoxalicine B. In the absence of olcJ, decaturin E may be shunted to a pathway in which it is oxidized to a ketone, possibly by olcF, to form decaturin D, which undergoes further allylic oxidation to yield decaturin G. Moreover, in the absence of oclK or oclL, oclB can convert decaturin C into 15-deoxyoxalicine A. This is Cytochrome P450 monooxygenase olcJ from Penicillium canescens.